A 208-amino-acid polypeptide reads, in one-letter code: Large ribosomal subunit protein eL13 (208 aa).

This sequence belongs to the eukaryotic ribosomal protein eL13 family.

This chain is Large ribosomal subunit protein eL13 (RPL13), found in Chlamydomonas sp. (strain W80).